A 184-amino-acid polypeptide reads, in one-letter code: Large ribosomal subunit protein uL6 (184 aa).

The protein belongs to the universal ribosomal protein uL6 family. In terms of assembly, part of the 50S ribosomal subunit.

Functionally, this protein binds to the 23S rRNA, and is important in its secondary structure. It is located near the subunit interface in the base of the L7/L12 stalk, and near the tRNA binding site of the peptidyltransferase center. This Onion yellows phytoplasma (strain OY-M) protein is Large ribosomal subunit protein uL6.